The following is a 151-amino-acid chain: MLRTSLTKGARLTGTRFVQTKALSKATLTDLPERWENMPNLEQKEIADNLTERQKLPWKTLNNEEIKAAWYISYGEWGPRRPVHGKGDVAFITKGVFLGLGISFGLFGLVRLLANPETPKTMNREWQLKSDEYLKSKNANPWGGYSQVQSK.

The transit peptide at 1 to 17 (MLRTSLTKGARLTGTRF) directs the protein to the mitochondrion. At 18–85 (VQTKALSKAT…EWGPRRPVHG (68 aa)) the chain is on the mitochondrial matrix side. The helical transmembrane segment at 86-108 (KGDVAFITKGVFLGLGISFGLFG) threads the bilayer. Residues 109–151 (LVRLLANPETPKTMNREWQLKSDEYLKSKNANPWGGYSQVQSK) lie on the Mitochondrial intermembrane side of the membrane.

The protein belongs to the cytochrome c oxidase IV family. As to quaternary structure, component of the cytochrome c oxidase (complex IV, CIV), a multisubunit enzyme composed of 12 subunits. The complex is composed of a catalytic core of 3 subunits COX1, COX2 and COX3, encoded in the mitochondrial DNA, and 9 supernumerary subunits COX4, COX5A (or COX5B), COX6, COX7, COX8, COX9, COX12, COX13 and COX26, which are encoded in the nuclear genome. COX5A is the predominant subunit V during aerobic/normoxic growth, it gets replaced by COX5B under anaerobic/hypoxic conditions. The complex exists as a monomer or a dimer and forms supercomplexes (SCs) in the inner mitochondrial membrane with a dimer of ubiquinol-cytochrome c oxidoreductase (cytochrome b-c1 complex, complex III, CIII), resulting in 2 different assemblies (supercomplexes III(2)IV and III(2)IV(2)).

Its subcellular location is the mitochondrion inner membrane. The protein operates within energy metabolism; oxidative phosphorylation. In terms of biological role, component of the cytochrome c oxidase, the last enzyme in the mitochondrial electron transport chain which drives oxidative phosphorylation. The respiratory chain contains 3 multisubunit complexes succinate dehydrogenase (complex II, CII), ubiquinol-cytochrome c oxidoreductase (cytochrome b-c1 complex, complex III, CIII) and cytochrome c oxidase (complex IV, CIV), that cooperate to transfer electrons derived from NADH and succinate to molecular oxygen, creating an electrochemical gradient over the inner membrane that drives transmembrane transport and the ATP synthase. Cytochrome c oxidase is the component of the respiratory chain that catalyzes the reduction of oxygen to water. Electrons originating from reduced cytochrome c in the intermembrane space (IMS) are transferred via the dinuclear copper A center (CU(A)) of COX2 and heme A of COX1 to the active site in COX1, a binuclear center (BNC) formed by heme A3 and copper B (CU(B)). The BNC reduces molecular oxygen to 2 water molecules using 4 electrons from cytochrome c in the IMS and 4 protons from the mitochondrial matrix. This Saccharomyces cerevisiae (strain ATCC 204508 / S288c) (Baker's yeast) protein is Cytochrome c oxidase subunit 5B, mitochondrial (COX5B).